We begin with the raw amino-acid sequence, 48 residues long: uncharacterized protein (48 aa).

Residues 1-48 (MSRRMGGGMPKINLSGAIPNNNTSTPSTPTLRSSVSVSSSNSRGLFLA) form a disordered region. Over residues 20-48 (NNNTSTPSTPTLRSSVSVSSSNSRGLFLA) the composition is skewed to low complexity.

This is an uncharacterized protein from Dictyostelium discoideum (Social amoeba).